Reading from the N-terminus, the 126-residue chain is Cell cycle protein GpsB (126 aa).

Residues 35–72 (LDLVIKDYQTYQENIDRLTADNTRLFNKVEELNRQLSA) adopt a coiled-coil conformation.

It belongs to the GpsB family. In terms of assembly, forms polymers through the coiled coil domains. Interacts with PBP1, MreC and EzrA.

Its subcellular location is the cytoplasm. In terms of biological role, divisome component that associates with the complex late in its assembly, after the Z-ring is formed, and is dependent on DivIC and PBP2B for its recruitment to the divisome. Together with EzrA, is a key component of the system that regulates PBP1 localization during cell cycle progression. Its main role could be the removal of PBP1 from the cell pole after pole maturation is completed. Also contributes to the recruitment of PBP1 to the division complex. Not essential for septum formation. The polypeptide is Cell cycle protein GpsB (Latilactobacillus sakei subsp. sakei (strain 23K) (Lactobacillus sakei subsp. sakei)).